A 500-amino-acid polypeptide reads, in one-letter code: Serine/threonine protein phosphatase 2A 57 kDa regulatory subunit B' kappa isoform (500 aa).

Residues 1–53 (MFKQFLSKLPRKSSKSDSGELNRSSSGPVSSPVQRSGTSGGGSGPVRSNSGKR) are disordered. Residues 21 to 37 (LNRSSSGPVSSPVQRSG) are compositionally biased toward polar residues.

The protein belongs to the phosphatase 2A regulatory subunit B56 family. PP2A consists of a common heteromeric enzyme, composed of a catalytic subunit (subunits C), a constant regulatory subunit (subunit A), and a variety of regulatory subunits such as subunits B (the R2/B/PR55/B55, R3/B''/PR72/PR130/PR59 and R5/B'/B56 families).

The protein localises to the cytoplasm. Its function is as follows. The B regulatory subunit may modulate substrate selectivity and catalytic activity, and may also direct the localization of the catalytic enzyme to a particular subcellular compartment. The chain is Serine/threonine protein phosphatase 2A 57 kDa regulatory subunit B' kappa isoform (B'KAPPA) from Arabidopsis thaliana (Mouse-ear cress).